A 49-amino-acid chain; its full sequence is Large ribosomal subunit protein bL33 (49 aa).

Belongs to the bacterial ribosomal protein bL33 family.

This Lactobacillus acidophilus (strain ATCC 700396 / NCK56 / N2 / NCFM) protein is Large ribosomal subunit protein bL33.